A 275-amino-acid polypeptide reads, in one-letter code: 2-C-methyl-D-erythritol 4-phosphate cytidylyltransferase (275 aa).

This sequence belongs to the IspD/TarI cytidylyltransferase family. IspD subfamily.

The catalysed reaction is 2-C-methyl-D-erythritol 4-phosphate + CTP + H(+) = 4-CDP-2-C-methyl-D-erythritol + diphosphate. Its pathway is isoprenoid biosynthesis; isopentenyl diphosphate biosynthesis via DXP pathway; isopentenyl diphosphate from 1-deoxy-D-xylulose 5-phosphate: step 2/6. Functionally, catalyzes the formation of 4-diphosphocytidyl-2-C-methyl-D-erythritol from CTP and 2-C-methyl-D-erythritol 4-phosphate (MEP). The chain is 2-C-methyl-D-erythritol 4-phosphate cytidylyltransferase from Corynebacterium jeikeium (strain K411).